The chain runs to 276 residues: Small ribosomal subunit protein uS3 (276 aa).

Residues 39-110 (IRRETMKFFK…KINIKIKEIK (72 aa)) form the KH type-2 domain. Positions 218-243 (DAGQVINRKSSREKSEHFDRSRVDDR) are disordered. A compositionally biased stretch (basic and acidic residues) spans 227 to 243 (SSREKSEHFDRSRVDDR).

It belongs to the universal ribosomal protein uS3 family. As to quaternary structure, part of the 30S ribosomal subunit. Forms a tight complex with proteins S10 and S14.

Its function is as follows. Binds the lower part of the 30S subunit head. Binds mRNA in the 70S ribosome, positioning it for translation. The sequence is that of Small ribosomal subunit protein uS3 from Borrelia hermsii (strain HS1 / DAH).